Here is a 416-residue protein sequence, read N- to C-terminus: Homogentisate 1,2-dioxygenase (416 aa).

H275 serves as the catalytic Proton acceptor. Positions 318 and 324 each coordinate Fe cation. Residues Y333 and H354 each contribute to the homogentisate site. H354 contacts Fe cation.

Belongs to the homogentisate dioxygenase family. Hexamer; dimer of trimers. Requires Fe cation as cofactor.

It carries out the reaction homogentisate + O2 = 4-maleylacetoacetate + H(+). It participates in amino-acid degradation; L-phenylalanine degradation; acetoacetate and fumarate from L-phenylalanine: step 4/6. In terms of biological role, involved in the catabolism of homogentisate (2,5-dihydroxyphenylacetate or 2,5-OH-PhAc), a central intermediate in the degradation of phenylalanine and tyrosine. Catalyzes the oxidative ring cleavage of the aromatic ring of homogentisate to yield maleylacetoacetate. In Legionella pneumophila (strain Corby), this protein is Homogentisate 1,2-dioxygenase.